The primary structure comprises 483 residues: Glutamate--tRNA ligase (483 aa).

Positions 9 to 19 (PSPTGFLHIGN) match the 'HIGH' region motif. The short motif at 253–257 (KLSKR) is the 'KMSKS' region element. Lys-256 lines the ATP pocket.

This sequence belongs to the class-I aminoacyl-tRNA synthetase family. Glutamate--tRNA ligase type 1 subfamily. In terms of assembly, monomer.

The protein resides in the cytoplasm. It carries out the reaction tRNA(Glu) + L-glutamate + ATP = L-glutamyl-tRNA(Glu) + AMP + diphosphate. Functionally, catalyzes the attachment of glutamate to tRNA(Glu) in a two-step reaction: glutamate is first activated by ATP to form Glu-AMP and then transferred to the acceptor end of tRNA(Glu). This Mycoplasma capricolum subsp. capricolum (strain California kid / ATCC 27343 / NCTC 10154) protein is Glutamate--tRNA ligase.